A 421-amino-acid polypeptide reads, in one-letter code: UDP-N-acetylglucosamine 1-carboxyvinyltransferase (421 aa).

22-23 lines the phosphoenolpyruvate pocket; the sequence is KN. Residue Arg93 participates in UDP-N-acetyl-alpha-D-glucosamine binding. Cys117 serves as the catalytic Proton donor. Position 117 is a 2-(S-cysteinyl)pyruvic acid O-phosphothioketal (Cys117). UDP-N-acetyl-alpha-D-glucosamine contacts are provided by residues 122-126, Asp308, and Val330; that span reads RPVDL.

It belongs to the EPSP synthase family. MurA subfamily.

Its subcellular location is the cytoplasm. The catalysed reaction is phosphoenolpyruvate + UDP-N-acetyl-alpha-D-glucosamine = UDP-N-acetyl-3-O-(1-carboxyvinyl)-alpha-D-glucosamine + phosphate. The protein operates within cell wall biogenesis; peptidoglycan biosynthesis. Functionally, cell wall formation. Adds enolpyruvyl to UDP-N-acetylglucosamine. The protein is UDP-N-acetylglucosamine 1-carboxyvinyltransferase of Pseudomonas aeruginosa (strain LESB58).